Consider the following 164-residue polypeptide: Crossover junction endodeoxyribonuclease RuvC (164 aa).

Catalysis depends on residues aspartate 7, glutamate 67, and aspartate 139. Residues aspartate 7, glutamate 67, and aspartate 139 each contribute to the Mg(2+) site.

This sequence belongs to the RuvC family. In terms of assembly, homodimer which binds Holliday junction (HJ) DNA. The HJ becomes 2-fold symmetrical on binding to RuvC with unstacked arms; it has a different conformation from HJ DNA in complex with RuvA. In the full resolvosome a probable DNA-RuvA(4)-RuvB(12)-RuvC(2) complex forms which resolves the HJ. Mg(2+) serves as cofactor.

The protein resides in the cytoplasm. It carries out the reaction Endonucleolytic cleavage at a junction such as a reciprocal single-stranded crossover between two homologous DNA duplexes (Holliday junction).. Functionally, the RuvA-RuvB-RuvC complex processes Holliday junction (HJ) DNA during genetic recombination and DNA repair. Endonuclease that resolves HJ intermediates. Cleaves cruciform DNA by making single-stranded nicks across the HJ at symmetrical positions within the homologous arms, yielding a 5'-phosphate and a 3'-hydroxyl group; requires a central core of homology in the junction. The consensus cleavage sequence is 5'-(A/T)TT(C/G)-3'. Cleavage occurs on the 3'-side of the TT dinucleotide at the point of strand exchange. HJ branch migration catalyzed by RuvA-RuvB allows RuvC to scan DNA until it finds its consensus sequence, where it cleaves and resolves the cruciform DNA. In Geobacter sp. (strain M21), this protein is Crossover junction endodeoxyribonuclease RuvC.